The primary structure comprises 337 residues: Phenylalanine--tRNA ligase alpha subunit (337 aa).

A Mg(2+)-binding site is contributed by E252.

This sequence belongs to the class-II aminoacyl-tRNA synthetase family. Phe-tRNA synthetase alpha subunit type 1 subfamily. Tetramer of two alpha and two beta subunits. Requires Mg(2+) as cofactor.

It localises to the cytoplasm. It carries out the reaction tRNA(Phe) + L-phenylalanine + ATP = L-phenylalanyl-tRNA(Phe) + AMP + diphosphate + H(+). This is Phenylalanine--tRNA ligase alpha subunit from Francisella tularensis subsp. novicida (strain U112).